A 698-amino-acid chain; its full sequence is Phenylalanine aminomutase (L-beta-phenylalanine forming) (698 aa).

Tyr80 serves as the catalytic Proton donor/acceptor. Residues 175-177 (ASG) constitute a cross-link (5-imidazolinone (Ala-Gly)). The residue at position 176 (Ser176) is a 2,3-didehydroalanine (Ser). Residues Asn231, Gln319, Arg325, Asn355, Lys427, Glu455, and Asn458 each coordinate (E)-cinnamate.

It belongs to the PAL/histidase family. Homotetramer. Contains an active site 4-methylidene-imidazol-5-one (MIO), which is formed autocatalytically by cyclization and dehydration of residues Ala-Ser-Gly.

The protein resides in the cytoplasm. The catalysed reaction is L-phenylalanine = L-beta-phenylalanine. The enzyme catalyses L-phenylalanine = (E)-cinnamate + NH4(+). It functions in the pathway alkaloid biosynthesis; taxol biosynthesis. It participates in phenylpropanoid metabolism; trans-cinnamate biosynthesis; trans-cinnamate from L-phenylalanine: step 1/1. Its function is as follows. Phenylalanine aminomutase that catalyzes the rearrangement of L-phenylalanine to R-beta-phenylalanine. Catalyzes the first committed step in the biosynthesis of the side chain of the alkaloid taxol (paclitaxel), a widely-used compound with antitumor activity. Also has low phenylalanine ammonia-lyase activity. This is Phenylalanine aminomutase (L-beta-phenylalanine forming) (pam) from Taxus canadensis (Canadian yew).